We begin with the raw amino-acid sequence, 122 residues long: Large ribosomal subunit protein uL14 (122 aa).

This sequence belongs to the universal ribosomal protein uL14 family. Part of the 50S ribosomal subunit. Forms a cluster with proteins L3 and L19. In the 70S ribosome, L14 and L19 interact and together make contacts with the 16S rRNA in bridges B5 and B8.

In terms of biological role, binds to 23S rRNA. Forms part of two intersubunit bridges in the 70S ribosome. The chain is Large ribosomal subunit protein uL14 from Kosmotoga olearia (strain ATCC BAA-1733 / DSM 21960 / TBF 19.5.1).